The chain runs to 116 residues: Large ribosomal subunit protein bL20 (116 aa).

It belongs to the bacterial ribosomal protein bL20 family.

Functionally, binds directly to 23S ribosomal RNA and is necessary for the in vitro assembly process of the 50S ribosomal subunit. It is not involved in the protein synthesizing functions of that subunit. The polypeptide is Large ribosomal subunit protein bL20 (Helicobacter acinonychis (strain Sheeba)).